The following is a 3926-amino-acid chain: Hybrid PKS-NRPS synthetase LUC5 (3926 aa).

In terms of domain architecture, Ketosynthase family 3 (KS3) spans 8–439; sequence REPIAIVGTA…GTNAHAIIES (432 aa). Catalysis depends on for beta-ketoacyl synthase activity residues Cys181, His318, and His359. A malonyl-CoA:ACP transacylase (MAT) domain region spans residues 545-863; the sequence is VFTGQGAQWP…QGALTRNVHD (319 aa). An N-terminal hotdog fold region spans residues 932–1065; that stretch reads HPLLGTRSTE…GHLRVDFGSE (134 aa). A dehydratase (DH) domain region spans residues 932–1225; that stretch reads HPLLGTRSTE…GLTCTSLLRP (294 aa). Positions 932–1228 constitute a PKS/mFAS DH domain; the sequence is HPLLGTRSTE…CTSLLRPGPS (297 aa). His964 functions as the Proton acceptor; for dehydratase activity in the catalytic mechanism. Residues 1081–1228 are C-terminal hotdog fold; that stretch reads LTSVNIERFY…CTSLLRPGPS (148 aa). Residue Asp1138 is the Proton donor; for dehydratase activity of the active site. Positions 1344 to 1572 are C-methyltransferase (CMeT) domain; it reads IRAVGENLTE…VNDFYDPSKY (229 aa). A ketoreductase (KR) domain 1 region spans residues 2091–2265; the sequence is TYLLAGCTGG…AASVIHIGMI (175 aa). The 78-residue stretch at 2371–2448 folds into the Carrier 1 domain; sequence EMLEVVEEEF…EICSTAVASL (78 aa). An O-(pantetheine 4'-phosphoryl)serine modification is found at Ser2408. A compositionally biased stretch (polar residues) spans 2474–2506; sequence VSGNGSSSSRAPTEFNSSTLKSGAQSTQGTSVS. The segment at 2474–2518 is disordered; that stretch reads VSGNGSSSSRAPTEFNSSTLKSGAQSTQGTSVSGDKDTNSVDGSA. Over residues 2507-2518 the composition is skewed to basic and acidic residues; sequence GDKDTNSVDGSA. The interval 2525 to 2810 is condensation; it reads PLSFAQERIW…VNLLPLRFQL (286 aa). The tract at residues 2979–3389 is adenylation; that stretch reads DWVKRQPDAI…RIAGDSQIKL (411 aa). The Carrier 2 domain maps to 3501 to 3580; it reads ETLTTTQERL…GMAAKIDGST (80 aa). Ser3540 carries the post-translational modification O-(pantetheine 4'-phosphoryl)serine. The thiolester reductase (TE) domain stretch occupies residues 3619 to 3840; the sequence is LTGATGFLGL…DFVPVEQVAD (222 aa).

It in the C-terminal section; belongs to the NRP synthetase family.

Its pathway is mycotoxin biosynthesis. Functionally, hybrid PKS-NRPS synthetase; part of the gene cluster that mediates the biosynthesis of the mycotoxin lucilactaene and the lucilactaene-related compound NG-391 that act as cell cycle inhibitors with potent growth inhibitory activity against malarial parasites, moderate growth inhibitory activity against cancer cells, and no activity against bacteria and fungi. The hybrid PKS-NRPS synthetase LUC5 is responsible for the condensation of one acetyl-coenzyme A (CoA) unit with six malonyl-CoA units and the amide linkage of the arising heptaketide and homoserine, subsequently releasing the first intermediate prelucilactaene B, as an alcohol with an open ring structure. Lucilactaene and NG-391 lack the 7-methyl group present in fusarins which is inserted in fusarins by the C-methyltransferase (CMeT) domain of the fusarin synthetase FUS1, suggesting that the CMet domain of LUC5 does not methylate this position. Within the pathway, both the cytochrome P450 monooxygenase LUC2 and the hydrolase LUC6 function in parallel in modification of prelucilactaene B. LUC6 may catalyze the 2-pyrrolidone ring formation to form prelucilactaene C from prelucilactaene B, followed by C-15 hydroxylation by the same enzyme to give prelucilactaene D, which is then converted to prelucilactaene E by epoxidation, and finally to prelucilactaene F by cyclization. Prelucilactane D, prelucilactaene E, and prelucilactaene F can be converted to dihydrolucilactaene, NG391, and lucilactaene, respectively, via C-20 methyl group hydroxylation by the cytochrome P450 monooxygenase LUC2. However, LUC2, unlike FUS8 in fusarin C biosynthesis, is not enough for the full oxidation of the C-20 methyl group into carboxylic acid, which is a prerequisite for the final methylation step. The aldehyde dehydrogenase LUC3 is involved in the biosynthesis by further oxidation of the C-20 alcoholic analog prelucilactaene G into a carboxylic derivative. This unidentified carboxylic derivative may be converted to demethyllucilactaene. As the last step, the methyltransferase LUC1 methylates the hydroxyl group at C-21 of demethyllucilactaene to generate lucilactaene. The sequence is that of Hybrid PKS-NRPS synthetase LUC5 from Fusarium sp.